The sequence spans 168 residues: NADH dehydrogenase [ubiquinone] 1 alpha subcomplex assembly factor 2 (168 aa).

The interval 112 to 168 (GKETSEELLPSPTATQVKGHASAPYFGREEPSVAPTSTGKTFQPGSWTPEDGKRQSQ) is disordered. The residue at position 133 (Ser-133) is a Phosphoserine. The span at 145–157 (APTSTGKTFQPGS) shows a compositional bias: polar residues.

This sequence belongs to the complex I NDUFA12 subunit family. In terms of assembly, interacts with ARMC9.

It localises to the mitochondrion. Acts as a molecular chaperone for mitochondrial complex I assembly. Complex I functions in the transfer of electrons from NADH to the respiratory chain. The immediate electron acceptor for the enzyme is believed to be ubiquinone. Is involved in the initial steps of cilia formation, including removal of CP110 from the mother centrioles, docking of membrane vesicles to the mother centrioles, and establishment of the transition zone. The polypeptide is NADH dehydrogenase [ubiquinone] 1 alpha subcomplex assembly factor 2 (Ndufaf2) (Mus musculus (Mouse)).